The sequence spans 104 residues: Fusaric acid biosynthesis protein 2 (104 aa).

Belongs to the YciI family.

The protein operates within mycotoxin biosynthesis. Functionally, part of the gene cluster that mediates the biosynthesis of fusaric acid, a mycotoxin with low to moderate toxicity to animals and humans, but with high phytotoxic properties. L-aspartate is suggested as fusaric acid amino acid precursor that is activated and further processed to O-acetyl-L-homoserine by cluster enzymes aspartate kinase FUB3 and homoserine O-acetyltransferase FUB5, as well as enzymes of the primary metabolism. The polyketide synthase (PKS) FUB1 generates the triketide trans-2-hexenal which is presumptively released by the hydrolase FUB4 and linked to the NRPS-bound amino acid precursor by NAD(P)-dependent dehydrogenase FUB6. FUB1, FUB4, and the non-canonical NRPS Fub8 may form an enzyme complex. Further processing of the NRPS-bound intermediate might be carried out by FUB6 and the sulfhydrylase FUB7, enabling a spontaneous electrocyclization to close the carbon backbone of fusaric acid. Dihydrofusaric acid is likely to be released via reduction by the thioester reductase (TR) domain of FUB8 whereupon the final oxidation to fusaric acid may (also) be performed by the FMN-dependent dehydrogenase FUB9. In Gibberella moniliformis (strain M3125 / FGSC 7600) (Maize ear and stalk rot fungus), this protein is Fusaric acid biosynthesis protein 2.